A 437-amino-acid chain; its full sequence is O-antigen export system ATP-binding protein RfbB (437 aa).

Residues L37 to A256 form the ABC transporter domain. An ATP-binding site is contributed by G69–S76.

It belongs to the ABC transporter superfamily.

Its subcellular location is the cell inner membrane. Functionally, may form an ATP-driven O-antigen export apparatus, in association with RfbA. This is O-antigen export system ATP-binding protein RfbB (rfbB) from Myxococcus xanthus.